A 212-amino-acid polypeptide reads, in one-letter code: MNLLIMGLPGAGKGTQAAKIVEEFGIAHISTGDMFRAAMANQTEMGRLAKSYIDKGELVPDEVTNGIVKERLAEDDIAEKGFLLDGYPRTIEQAHALDATLEELGLRLDGVINIKVDPSCLVERLSGRIINRKTGETFHKVFNPPVDYKEEDYYQREDDKPETVKRRLDVNMAQGEPILEHYRKLGLVTDIEGNQEITDVFADVEKALLELK.

An ATP-binding site is contributed by 10-15 (GAGKGT). The segment at 30 to 59 (STGDMFRAAMANQTEMGRLAKSYIDKGELV) is NMP. AMP is bound by residues Thr-31, Arg-36, 57 to 59 (ELV), 86 to 89 (GYPR), and Gln-93. Residues 127 to 159 (GRIINRKTGETFHKVFNPPVDYKEEDYYQREDD) are LID. Residues Arg-128 and 137–138 (TF) contribute to the ATP site. Arg-156 and Arg-167 together coordinate AMP. Gln-195 contacts ATP.

Belongs to the adenylate kinase family. As to quaternary structure, monomer.

It is found in the cytoplasm. It catalyses the reaction AMP + ATP = 2 ADP. It functions in the pathway purine metabolism; AMP biosynthesis via salvage pathway; AMP from ADP: step 1/1. In terms of biological role, catalyzes the reversible transfer of the terminal phosphate group between ATP and AMP. Plays an important role in cellular energy homeostasis and in adenine nucleotide metabolism. This is Adenylate kinase from Streptococcus pyogenes serotype M1.